The following is a 179-amino-acid chain: Transcription initiation factor TFIID subunit 10 (179 aa).

The disordered stretch occupies residues 1 to 23 (MNDPEQYEPSSSTESVLMPPPAL).

This sequence belongs to the TAF10 family. As to quaternary structure, component of the TFIID basal transcription factor complex, composed of TATA-box-binding protein tbp-1, and a number of TBP-associated factors (TAFs).

It is found in the nucleus. In terms of biological role, the TFIID basal transcription factor complex plays a major role in the initiation of RNA polymerase II (Pol II)-dependent transcription. TFIID recognizes and binds promoters via its subunit tbp-1, a TATA-box-binding protein, and promotes assembly of the pre-initiation complex (PIC). The TFIID complex consists of tbp-1 and TBP-associated factors (TAFs), including taf-10. Essential for early embryonic development, but not required for transcription of some genes; probably acts via activating transcription initiation by RNA Pol II, as part of the TFIID complex. The chain is Transcription initiation factor TFIID subunit 10 from Caenorhabditis elegans.